Reading from the N-terminus, the 353-residue chain is DNA polymerase IV (353 aa).

One can recognise a UmuC domain in the interval 6–187 (IIHIDCDCFY…LPVTKLHGVG (182 aa)). Mg(2+) contacts are provided by Asp10 and Asp105. Glu106 is a catalytic residue.

This sequence belongs to the DNA polymerase type-Y family. As to quaternary structure, monomer. Mg(2+) is required as a cofactor.

It localises to the cytoplasm. It catalyses the reaction DNA(n) + a 2'-deoxyribonucleoside 5'-triphosphate = DNA(n+1) + diphosphate. Functionally, poorly processive, error-prone DNA polymerase involved in untargeted mutagenesis. Copies undamaged DNA at stalled replication forks, which arise in vivo from mismatched or misaligned primer ends. These misaligned primers can be extended by PolIV. Exhibits no 3'-5' exonuclease (proofreading) activity. May be involved in translesional synthesis, in conjunction with the beta clamp from PolIII. This Pseudomonas savastanoi pv. phaseolicola (strain 1448A / Race 6) (Pseudomonas syringae pv. phaseolicola (strain 1448A / Race 6)) protein is DNA polymerase IV.